A 219-amino-acid chain; its full sequence is MAAVTAKLVKELRDKTGAGMMDCKKALAATDGDTDKAVEWLRQKGIASAEKKSGRTAAEGSIGSYIHTGARVGVLIEINCETDFVARGDMFQELLRDVSMQVAACPNVEYVTTDEIPPEISEREKAIEMGRDDLEGKPEKMKEKIVEGRIAKRLKELALMEQPFIKDSSITVAELVKQAAGKIGENVKVRRFTRYTLGEGIEVEDNDFAAEVASMQNAG.

The segment at 82 to 85 (TDFV) is involved in Mg(2+) ion dislocation from EF-Tu.

This sequence belongs to the EF-Ts family.

It is found in the cytoplasm. Its function is as follows. Associates with the EF-Tu.GDP complex and induces the exchange of GDP to GTP. It remains bound to the aminoacyl-tRNA.EF-Tu.GTP complex up to the GTP hydrolysis stage on the ribosome. This is Elongation factor Ts from Synechococcus sp. (strain CC9902).